Reading from the N-terminus, the 575-residue chain is MISGILASPGIAFGKALLLKEDEIVIDRKKISADQVDQEVERFLSGRAKASAQLETIKTKAGETFGEEKEAIFEGHIMLLEDEELEQEIIALIKDKHMTADAAAHEVIEGQASALEELDDEYLKERAADVRDIGKRLLRNILGLKIIDLSAIQDEVILVAADLTPSETAQLNLKKVLGFITDAGGRTSHTSIMARSLELPAIVGTGSVTSQVKNDDYLILDAVNNQVYVNPTNEVIDKMRAVQEQVASEKAELAKLKDLPAITLDGHQVEVCANIGTVRDVEGAERNGAEGVGLYRTEFLFMDRDALPTEEEQFAAYKAVAEACGSQAVIVRTMDIGGDKELPYMNFPKEENPFLGWRAIRIAMDRREILRDQLRAILRASAFGKLRIMFPMIISVEEVRALRKEIEIYKQELRDEGKAFDESIEIGVMVETPAAATIARHLAKEVDFFSIGTNDLTQYTLAVDRGNDMISHLYQPMSPSVLNLIKQVIDASHAEGKWTGMCGELAGDERATLLLLGMGLDEFSMSAISIPRIKKIIRNTNFEDAKVLAEQALAQPTTDELMTLVNKFIEEKTIC.

Tyrosine 122 carries the post-translational modification Phosphotyrosine. Histidine 189 serves as the catalytic Tele-phosphohistidine intermediate. Phosphoenolpyruvate is bound by residues arginine 296 and arginine 332. Residues glutamate 431 and aspartate 455 each contribute to the Mg(2+) site. Phosphoenolpyruvate contacts are provided by residues 454-455 (ND) and arginine 465. Cysteine 502 serves as the catalytic Proton donor.

Belongs to the PEP-utilizing enzyme family. As to quaternary structure, homodimer. Interacts with the pole-localizer protein TmaR. Binding to TmaR is reversible as long as TmaR can get phosphorylated, whereas binding to non-phosphorylated TmaR is very strong and shifts the equilibrium toward binding. Mg(2+) is required as a cofactor. In terms of processing, phosphorylated on Tyr-122. Phosphorylation on Tyr-122 is important for polar localization but not for interaction with TmaR and for activity.

It is found in the cytoplasm. The enzyme catalyses L-histidyl-[protein] + phosphoenolpyruvate = N(pros)-phospho-L-histidyl-[protein] + pyruvate. Inhibited by oxalate. Its function is as follows. General (non sugar-specific) component of the phosphoenolpyruvate-dependent sugar phosphotransferase system (sugar PTS). This major carbohydrate active-transport system catalyzes the phosphorylation of incoming sugar substrates concomitantly with their translocation across the cell membrane. Enzyme I transfers the phosphoryl group from phosphoenolpyruvate (PEP) to the phosphoryl carrier protein (HPr). Can also use (Z)-3-fluoro-PEP (ZFPEP), (Z)-3-methyl-PEP (ZMePEP), (Z)-3-chloro-PEP (ZClPEP) and (E)-3-chloro-PEP (EClPEP) as alternative phosphoryl donors. This is Phosphoenolpyruvate-protein phosphotransferase from Escherichia coli (strain K12).